The sequence spans 85 residues: UPF0410 protein YdaS (85 aa).

The next 3 membrane-spanning stretches (helical) occupy residues 2–22, 28–48, and 58–78; these read LSFLVSLVVAIVIGLIGSAIV, GGIFGSMIAGLIGAWIGHGLL, and FAIFPAIIGAAIFVFLLGLIF.

Belongs to the UPF0410 family.

Its subcellular location is the cell membrane. The chain is UPF0410 protein YdaS (ydaS) from Bacillus subtilis (strain 168).